The primary structure comprises 188 residues: Elongation factor P (188 aa).

N6-(3,6-diaminohexanoyl)-5-hydroxylysine is present on K34.

The protein belongs to the elongation factor P family. Post-translationally, may be beta-lysylated on the epsilon-amino group of Lys-34 by the combined action of EpmA and EpmB, and then hydroxylated on the C5 position of the same residue by EpmC (if this protein is present). Lysylation is critical for the stimulatory effect of EF-P on peptide-bond formation. The lysylation moiety may extend toward the peptidyltransferase center and stabilize the terminal 3-CCA end of the tRNA. Hydroxylation of the C5 position on Lys-34 may allow additional potential stabilizing hydrogen-bond interactions with the P-tRNA.

The protein resides in the cytoplasm. The protein operates within protein biosynthesis; polypeptide chain elongation. Involved in peptide bond synthesis. Alleviates ribosome stalling that occurs when 3 or more consecutive Pro residues or the sequence PPG is present in a protein, possibly by augmenting the peptidyl transferase activity of the ribosome. Modification of Lys-34 is required for alleviation. This chain is Elongation factor P, found in Proteus mirabilis (strain HI4320).